Reading from the N-terminus, the 431-residue chain is Tol-Pal system protein TolB (431 aa).

The signal sequence occupies residues 1-18; sequence MKALLLSLLLLLPVVALA. The tract at residues 410-431 is disordered; the sequence is LPLRTEKGTYQTPDWSPLPQAQ.

Belongs to the TolB family. The Tol-Pal system is composed of five core proteins: the inner membrane proteins TolA, TolQ and TolR, the periplasmic protein TolB and the outer membrane protein Pal. They form a network linking the inner and outer membranes and the peptidoglycan layer.

The protein localises to the periplasm. Part of the Tol-Pal system, which plays a role in outer membrane invagination during cell division and is important for maintaining outer membrane integrity. This chain is Tol-Pal system protein TolB, found in Myxococcus xanthus.